We begin with the raw amino-acid sequence, 105 residues long: Large ribosomal subunit protein uL24 (105 aa).

Belongs to the universal ribosomal protein uL24 family. Part of the 50S ribosomal subunit.

In terms of biological role, one of two assembly initiator proteins, it binds directly to the 5'-end of the 23S rRNA, where it nucleates assembly of the 50S subunit. Functionally, one of the proteins that surrounds the polypeptide exit tunnel on the outside of the subunit. The chain is Large ribosomal subunit protein uL24 from Dictyoglomus thermophilum (strain ATCC 35947 / DSM 3960 / H-6-12).